Here is a 457-residue protein sequence, read N- to C-terminus: Casein kinase 1-like protein 11 (457 aa).

The 270-residue stretch at 15–284 (FKLGRKLGSG…LRRLFRDLFI (270 aa)) folds into the Protein kinase domain. Residues 21–29 (LGSGSFGEL) and Lys-44 contribute to the ATP site. Asp-134 acts as the Proton acceptor in catalysis. Disordered stretches follow at residues 305–337 (GSSSRPRPTPRPALDPPGPPAERAEKPTVGQDL) and 352–442 (NVSS…EDAI). The segment covering 311-324 (RPTPRPALDPPGPP) has biased composition (pro residues). 2 stretches are compositionally biased toward polar residues: residues 383-403 (NGSTSKRGVISSTRPGSSAEP) and 409-429 (SRLFSSGSRHATTQRVPQSYE).

The protein belongs to the protein kinase superfamily. CK1 Ser/Thr protein kinase family. Casein kinase I subfamily. Monomer. Autophosphorylated.

The protein resides in the cytoplasm. Its subcellular location is the nucleus. The catalysed reaction is L-seryl-[protein] + ATP = O-phospho-L-seryl-[protein] + ADP + H(+). The enzyme catalyses L-threonyl-[protein] + ATP = O-phospho-L-threonyl-[protein] + ADP + H(+). With respect to regulation, partially inhibited by N-(2-aminoethyl)-5-chloroisoquinoline-8-sulfonamide (CKI-7). Casein kinases are operationally defined by their preferential utilization of acidic proteins such as caseins as substrates. Can phosphorylate casein, phosvitin, myosin light chains and poly(Glu,Tyr) in vitro. The polypeptide is Casein kinase 1-like protein 11 (Arabidopsis thaliana (Mouse-ear cress)).